A 147-amino-acid polypeptide reads, in one-letter code: Large ribosomal subunit protein uL15 (147 aa).

The interval 1–45 (MRLEDLRPTPGAMKKRKRVGRGPGSGHGKTSGRGHKGQKARGSGK) is disordered. The span at 30-44 (TSGRGHKGQKARGSG) shows a compositional bias: basic residues.

This sequence belongs to the universal ribosomal protein uL15 family. Part of the 50S ribosomal subunit.

Binds to the 23S rRNA. The sequence is that of Large ribosomal subunit protein uL15 from Thermotoga sp. (strain RQ2).